Reading from the N-terminus, the 309-residue chain is Methionyl-tRNA formyltransferase (309 aa).

109 to 112 (SLLP) provides a ligand contact to (6S)-5,6,7,8-tetrahydrofolate.

It belongs to the Fmt family.

It catalyses the reaction L-methionyl-tRNA(fMet) + (6R)-10-formyltetrahydrofolate = N-formyl-L-methionyl-tRNA(fMet) + (6S)-5,6,7,8-tetrahydrofolate + H(+). Attaches a formyl group to the free amino group of methionyl-tRNA(fMet). The formyl group appears to play a dual role in the initiator identity of N-formylmethionyl-tRNA by promoting its recognition by IF2 and preventing the misappropriation of this tRNA by the elongation apparatus. The protein is Methionyl-tRNA formyltransferase of Clostridium botulinum (strain Alaska E43 / Type E3).